Consider the following 86-residue polypeptide: Small ribosomal subunit protein bS20 (86 aa).

It belongs to the bacterial ribosomal protein bS20 family.

Its function is as follows. Binds directly to 16S ribosomal RNA. The sequence is that of Small ribosomal subunit protein bS20 from Rhodococcus opacus (strain B4).